The following is a 359-amino-acid chain: WAT1-related protein At4g28040 (359 aa).

Helical transmembrane passes span 10-30, 37-57, 66-86, 103-123, 133-153, 170-190, 204-224, 240-260, 266-286, and 292-312; these read LALV…KAAF, TVFV…ISFI, PSLG…GVTV, ACAM…IVGF, SVAK…MTFL, WLLG…WLIL, TSAC…LALG, SCCI…AWIV, VFSA…GALY, and YLGS…VLWG. In terms of domain architecture, EamA 1 spans 18 to 131; sequence TSAGVALFTK…GFESIKRRSM (114 aa). In terms of domain architecture, EamA 2 spans 199–310; it reads PDHLYTSACT…AIILGLYIVL (112 aa).

This sequence belongs to the drug/metabolite transporter (DMT) superfamily. Plant drug/metabolite exporter (P-DME) (TC 2.A.7.4) family.

The protein localises to the membrane. The protein is WAT1-related protein At4g28040 of Arabidopsis thaliana (Mouse-ear cress).